We begin with the raw amino-acid sequence, 257 residues long: Type III pantothenate kinase (257 aa).

6 to 13 (DCGNTNTV) serves as a coordination point for ATP. 107–110 (GPDR) contributes to the substrate binding site. Aspartate 109 serves as the catalytic Proton acceptor. Aspartate 129 provides a ligand contact to K(+). Threonine 132 serves as a coordination point for ATP. Threonine 184 is a binding site for substrate.

Belongs to the type III pantothenate kinase family. As to quaternary structure, homodimer. NH4(+) serves as cofactor. It depends on K(+) as a cofactor.

The protein localises to the cytoplasm. The catalysed reaction is (R)-pantothenate + ATP = (R)-4'-phosphopantothenate + ADP + H(+). The protein operates within cofactor biosynthesis; coenzyme A biosynthesis; CoA from (R)-pantothenate: step 1/5. Catalyzes the phosphorylation of pantothenate (Pan), the first step in CoA biosynthesis. The chain is Type III pantothenate kinase from Roseobacter denitrificans (strain ATCC 33942 / OCh 114) (Erythrobacter sp. (strain OCh 114)).